The sequence spans 199 residues: Holliday junction branch migration complex subunit RuvA (199 aa).

Positions 1–65 are domain I; it reads MIGWLHGQII…EDALLLYGFL (65 aa). The interval 66–144 is domain II; the sequence is DKEERSLFRS…QFDGSVSDTF (79 aa). Residues 144-148 are flexible linker; sequence FQKQA. A domain III region spans residues 149-199; sequence GSTHSQQEAISALEALGYKPQEAWKVVNKIDNGNKSCEQLIREALQILSSR.

The protein belongs to the RuvA family. As to quaternary structure, homotetramer. Forms an RuvA(8)-RuvB(12)-Holliday junction (HJ) complex. HJ DNA is sandwiched between 2 RuvA tetramers; dsDNA enters through RuvA and exits via RuvB. An RuvB hexamer assembles on each DNA strand where it exits the tetramer. Each RuvB hexamer is contacted by two RuvA subunits (via domain III) on 2 adjacent RuvB subunits; this complex drives branch migration. In the full resolvosome a probable DNA-RuvA(4)-RuvB(12)-RuvC(2) complex forms which resolves the HJ.

It localises to the cytoplasm. The RuvA-RuvB-RuvC complex processes Holliday junction (HJ) DNA during genetic recombination and DNA repair, while the RuvA-RuvB complex plays an important role in the rescue of blocked DNA replication forks via replication fork reversal (RFR). RuvA specifically binds to HJ cruciform DNA, conferring on it an open structure. The RuvB hexamer acts as an ATP-dependent pump, pulling dsDNA into and through the RuvAB complex. HJ branch migration allows RuvC to scan DNA until it finds its consensus sequence, where it cleaves and resolves the cruciform DNA. The chain is Holliday junction branch migration complex subunit RuvA from Legionella pneumophila (strain Paris).